The sequence spans 279 residues: MTEHMRIPLAGVIGSPIAHSRSPALHGYWLKRYGLKGHYIPMDVAQADLREVLAAMPRMGFVGCNVTIPHKETVIALADIVTDRAALIGAANTLIFRKDGKIHADNTDGAGFTANLRQNAPDWQPQAAPAVVWGAGGAARAVIAALIEVGVPEIRLSNRSRARADALRSDFGAKVQVFDWVQAGNILEDATTVVNTTSLGMIGKPDFRVPLDALSPKAVVTDLVYTPLRTRLLAEAEAAGCRTVDGLGMLLHQAAPGFERWFGVRPEVDEDTRAAVLAT.

Shikimate is bound by residues 20–22 (SRS) and Thr-67. Lys-71 acts as the Proton acceptor in catalysis. Position 83 (Asp-83) interacts with NADP(+). Shikimate-binding residues include Asn-92 and Asp-108. NADP(+) contacts are provided by residues 134–138 (GAGGA) and Leu-223. Shikimate is bound at residue Tyr-225. Gly-246 contacts NADP(+).

It belongs to the shikimate dehydrogenase family. As to quaternary structure, homodimer.

It catalyses the reaction shikimate + NADP(+) = 3-dehydroshikimate + NADPH + H(+). Its pathway is metabolic intermediate biosynthesis; chorismate biosynthesis; chorismate from D-erythrose 4-phosphate and phosphoenolpyruvate: step 4/7. Involved in the biosynthesis of the chorismate, which leads to the biosynthesis of aromatic amino acids. Catalyzes the reversible NADPH linked reduction of 3-dehydroshikimate (DHSA) to yield shikimate (SA). In Cereibacter sphaeroides (strain ATCC 17025 / ATH 2.4.3) (Rhodobacter sphaeroides), this protein is Shikimate dehydrogenase (NADP(+)).